The chain runs to 511 residues: uncharacterized protein (511 aa).

14 consecutive transmembrane segments (helical) span residues 7–27 (WVIS…NTAL), 46–66 (VNPI…GPLL), 80–100 (LPVF…ALMA), 107–127 (GAAT…SFPI), 134–154 (LLVL…LGTI), 163–183 (WLFF…YFFL), 200–220 (AGIL…IFLQ), 226–246 (SGYV…LLIV), 266–286 (VLGL…LSAF), 301–321 (LILL…LSAL), 329–349 (GMLG…WLHI), 357–377 (MFAA…AAGL), 394–414 (TAVQ…IGFF), and 437–457 (LFFI…CMNA). A disordered region spans residues 465–486 (AHKPHDKAKTAPEKPAVSAQGL).

This sequence belongs to the major facilitator superfamily.

The protein resides in the cell membrane. This is an uncharacterized protein from Bacillus subtilis (strain 168).